We begin with the raw amino-acid sequence, 513 residues long: Tryptophan--tRNA ligase 1 (513 aa).

The 'HIGH' region signature appears at 86 to 94 (PTGDPHIGH). The short motif at 393 to 397 (KMSSS) is the 'KMSKS' region element.

This sequence belongs to the class-I aminoacyl-tRNA synthetase family.

The protein localises to the cytoplasm. It catalyses the reaction tRNA(Trp) + L-tryptophan + ATP = L-tryptophyl-tRNA(Trp) + AMP + diphosphate + H(+). The protein is Tryptophan--tRNA ligase 1 of Halobacterium salinarum (strain ATCC 700922 / JCM 11081 / NRC-1) (Halobacterium halobium).